The chain runs to 113 residues: Large ribosomal subunit protein bL19 (113 aa).

This sequence belongs to the bacterial ribosomal protein bL19 family.

This protein is located at the 30S-50S ribosomal subunit interface and may play a role in the structure and function of the aminoacyl-tRNA binding site. The sequence is that of Large ribosomal subunit protein bL19 from Rhodococcus jostii (strain RHA1).